The chain runs to 120 residues: MFMLPKYQTFWVFIMISSLIPLLALLISRLLAPVSKGPEKMTSYESGIEPMGDAWIQFQIRYYSFALVFVIFDVETVFLYPWAMSFYELGIFAFIEALIFVFILIIGLVYAWRKRALEWS.

3 helical membrane-spanning segments follow: residues 7–27 (YQTF…ALLI), 64–84 (SFAL…PWAM), and 89–109 (LGIF…IGLV).

This sequence belongs to the complex I subunit 3 family. NDH is composed of at least 16 different subunits, 5 of which are encoded in the nucleus.

Its subcellular location is the plastid. It is found in the chloroplast thylakoid membrane. It carries out the reaction a plastoquinone + NADH + (n+1) H(+)(in) = a plastoquinol + NAD(+) + n H(+)(out). The enzyme catalyses a plastoquinone + NADPH + (n+1) H(+)(in) = a plastoquinol + NADP(+) + n H(+)(out). In terms of biological role, NDH shuttles electrons from NAD(P)H:plastoquinone, via FMN and iron-sulfur (Fe-S) centers, to quinones in the photosynthetic chain and possibly in a chloroplast respiratory chain. The immediate electron acceptor for the enzyme in this species is believed to be plastoquinone. Couples the redox reaction to proton translocation, and thus conserves the redox energy in a proton gradient. This Psilotum nudum (Whisk fern) protein is NAD(P)H-quinone oxidoreductase subunit 3, chloroplastic.